Here is a 446-residue protein sequence, read N- to C-terminus: Probable glycine dehydrogenase (decarboxylating) subunit 1 (446 aa).

This sequence belongs to the GcvP family. N-terminal subunit subfamily. As to quaternary structure, the glycine cleavage system is composed of four proteins: P, T, L and H. In this organism, the P 'protein' is a heterodimer of two subunits.

The catalysed reaction is N(6)-[(R)-lipoyl]-L-lysyl-[glycine-cleavage complex H protein] + glycine + H(+) = N(6)-[(R)-S(8)-aminomethyldihydrolipoyl]-L-lysyl-[glycine-cleavage complex H protein] + CO2. Its function is as follows. The glycine cleavage system catalyzes the degradation of glycine. The P protein binds the alpha-amino group of glycine through its pyridoxal phosphate cofactor; CO(2) is released and the remaining methylamine moiety is then transferred to the lipoamide cofactor of the H protein. In Desulforamulus reducens (strain ATCC BAA-1160 / DSM 100696 / MI-1) (Desulfotomaculum reducens), this protein is Probable glycine dehydrogenase (decarboxylating) subunit 1.